Consider the following 610-residue polypeptide: Peptidyl-prolyl cis-trans isomerase 9 (610 aa).

At serine 13 the chain carries Phosphoserine. 3 WD repeats span residues 45–83 (MHNA…VEYI), 88–127 (AHNA…LVNI), and 177–216 (KHTA…QKPD). A PPIase cyclophilin-type domain is found at 453-607 (LGKAAIIHTT…EPTKIINISI (155 aa)).

The protein belongs to the cyclophilin-type PPIase family.

Its subcellular location is the nucleus. It carries out the reaction [protein]-peptidylproline (omega=180) = [protein]-peptidylproline (omega=0). In terms of biological role, PPIases accelerate the folding of proteins. It catalyzes the cis-trans isomerization of proline imidic peptide bonds in oligopeptides. The protein is Peptidyl-prolyl cis-trans isomerase 9 (cyp9) of Schizosaccharomyces pombe (strain 972 / ATCC 24843) (Fission yeast).